The following is a 122-amino-acid chain: Large ribosomal subunit protein uL14 (122 aa).

The protein belongs to the universal ribosomal protein uL14 family. In terms of assembly, part of the 50S ribosomal subunit. Forms a cluster with proteins L3 and L19. In the 70S ribosome, L14 and L19 interact and together make contacts with the 16S rRNA in bridges B5 and B8.

Binds to 23S rRNA. Forms part of two intersubunit bridges in the 70S ribosome. This chain is Large ribosomal subunit protein uL14, found in Polynucleobacter necessarius subsp. necessarius (strain STIR1).